Reading from the N-terminus, the 360-residue chain is WD repeat domain phosphoinositide-interacting protein 4 (360 aa).

7 WD repeats span residues M1–V34, K40–D84, K92–F128, R133–L174, S183–T222, K227–L266, and G284–D329. Residues L231–G234 carry the L/FRRG motif motif.

This sequence belongs to the WD repeat PROPPIN family. Interacts with WIPI1. Interacts with WIPI2. Interacts with ATG2A and ATG2B. Interacts with ULK1. May interact with the PRKAA1, PRKAA2, PRKAB1 and PRKAG1 subunits of the AMPK kinase. May interact with NUDC. As to expression, ubiquitously expressed, with high expression in skeletal muscle and heart. Weakly expressed in liver and placenta. Expression is down-regulated in pancreatic and in kidney tumors.

It localises to the preautophagosomal structure. The protein resides in the cytoplasm. With respect to regulation, activated upon amino-acid starvation. Component of the autophagy machinery that controls the major intracellular degradation process by which cytoplasmic materials are packaged into autophagosomes and delivered to lysosomes for degradation. Binds phosphatidylinositol 3-phosphate (PtdIns3P). Activated by the STK11/AMPK signaling pathway upon starvation, WDR45 is involved in autophagosome assembly downstream of WIPI2, regulating the size of forming autophagosomes. Together with WIPI1, promotes ATG2 (ATG2A or ATG2B)-mediated lipid transfer by enhancing ATG2-association with phosphatidylinositol 3-monophosphate (PI3P)-containing membranes. Probably recruited to membranes through its PtdIns3P activity. The chain is WD repeat domain phosphoinositide-interacting protein 4 (WDR45) from Homo sapiens (Human).